A 464-amino-acid polypeptide reads, in one-letter code: uncharacterized protein (464 aa).

An N-terminal signal peptide occupies residues 1-24; the sequence is MSRFVPRIIPFYLLLLVAGGTANA.

Belongs to the intimin/invasin family.

Its subcellular location is the periplasm. This is an uncharacterized protein from Escherichia coli (strain K12).